Here is a 224-residue protein sequence, read N- to C-terminus: UPF0758 protein PLES_57141 (224 aa).

One can recognise an MPN domain in the interval 102 to 224 (ILESPQAVRD…PLSLAEYGWL (123 aa)). Zn(2+) is bound by residues His173, His175, and Asp186. Positions 173–186 (HNHPSGDARPSLAD) match the JAMM motif motif.

It belongs to the UPF0758 family.

In Pseudomonas aeruginosa (strain LESB58), this protein is UPF0758 protein PLES_57141.